A 628-amino-acid polypeptide reads, in one-letter code: Basal cell adhesion molecule (628 aa).

The signal sequence occupies residues 1 to 31 (MEPPDARAGARRAPRLLVLALLLAAPPGSKA). Ig-like V-type domains follow at residues 32–142 (EVRL…ARLK) and 150–253 (PEVS…RLDG). The Extracellular segment spans residues 32–547 (EVRLSVPPLV…GTVAPQTSQA (516 aa)). Intrachain disulfides connect C53-C125, C172-C237, and C291-C337. Ig-like C2-type domains are found at residues 254–355 (PSFS…KTLE), 355–441 (ELRV…RSFR), and 448–538 (PELK…FHFG). Residues N321, N330, and N378 are each glycosylated (N-linked (GlcNAc...) asparagine). 2 disulfides stabilise this stretch: C384-C424 and C473-C522. Residues 548 to 568 (GVAVMAVAISVALLLLVVAVF) form a helical membrane-spanning segment. Topologically, residues 569–628 (YCMRRKGRPGCCQWGEKGSPPPGEPKLSHSGSQRPEQTGLLMGSASGGAKHGSGGFGDEC) are cytoplasmic. Residues 580 to 628 (CQWGEKGSPPPGEPKLSHSGSQRPEQTGLLMGSASGGAKHGSGGFGDEC) form a disordered region. A phosphoserine mark is found at S596, S598, S600, and S621. Positions 613-628 (ASGGAKHGSGGFGDEC) are enriched in gly residues.

Homodimer. Interacts with ITGA4:ITGB1. Interacts with spectrins SPTA1 and SPTB1. Post-translationally, epinephrine-stimulated phosphorylation of Ser-621 by PKA enhances adhesion to laminin. Ser-621 can also be phosphorylated by AKT1.

Its subcellular location is the cell membrane. Functionally, transmembrane glycoprotein that functions as both a receptor and an adhesion molecule playing a crucial role in cell adhesion, motility, migration and invasion. Extracellular domain enables binding to extracellular matrix proteins, such as laminin, integrin and other ligands while its intracellular domain interacts with cytoskeletal proteins like hemoglobin, facilitating cell signal transduction. Serves as a receptor for laminin alpha-5/LAMA5 to promote cell adhesion. Mechanistically, JAK2 induces BCAM phosphorylation and activates its adhesion to laminin by stimulating a Rap1/AKT signaling pathway in the absence of EPOR. This chain is Basal cell adhesion molecule (BCAM), found in Bos taurus (Bovine).